The chain runs to 396 residues: Elongation factor Tu (396 aa).

One can recognise a tr-type G domain in the interval 10–205 (KTHANIGTIG…AVDEYIPTPE (196 aa)). The tract at residues 19–26 (GHVDHGKT) is G1. 19-26 (GHVDHGKT) contacts GTP. A Mg(2+)-binding site is contributed by Thr-26. A G2 region spans residues 61-65 (GITIS). Positions 82–85 (DCPG) are G3. Residues 82–86 (DCPGH) and 137–140 (NKCD) each bind GTP. The G4 stretch occupies residues 137-140 (NKCD). The tract at residues 175–177 (SAL) is G5.

This sequence belongs to the TRAFAC class translation factor GTPase superfamily. Classic translation factor GTPase family. EF-Tu/EF-1A subfamily. As to quaternary structure, monomer.

It is found in the cytoplasm. It catalyses the reaction GTP + H2O = GDP + phosphate + H(+). Its function is as follows. GTP hydrolase that promotes the GTP-dependent binding of aminoacyl-tRNA to the A-site of ribosomes during protein biosynthesis. In Shouchella clausii (strain KSM-K16) (Alkalihalobacillus clausii), this protein is Elongation factor Tu.